The sequence spans 453 residues: D-aminoacyl-tRNA deacylase (453 aa).

Residues 428–453 (VRADVALHERPRERVRRPSDDEGKGN) form a disordered region.

The protein belongs to the DtdA deacylase family. As to quaternary structure, monomer. The cofactor is Zn(2+).

The enzyme catalyses a D-aminoacyl-tRNA + H2O = a tRNA + a D-alpha-amino acid + H(+). It catalyses the reaction glycyl-tRNA(Ala) + H2O = tRNA(Ala) + glycine + H(+). D-aminoacyl-tRNA deacylase with broad substrate specificity. By recycling D-aminoacyl-tRNA to D-amino acids and free tRNA molecules, this enzyme counteracts the toxicity associated with the formation of D-aminoacyl-tRNA entities in vivo. The polypeptide is D-aminoacyl-tRNA deacylase (Halobacterium salinarum (strain ATCC 29341 / DSM 671 / R1)).